The primary structure comprises 165 residues: Cyclic pyranopterin monophosphate synthase (165 aa).

Residues 76-78 (LCH) and 114-115 (ME) each bind substrate. The active site involves aspartate 129.

The protein belongs to the MoaC family. As to quaternary structure, homohexamer; trimer of dimers.

The catalysed reaction is (8S)-3',8-cyclo-7,8-dihydroguanosine 5'-triphosphate = cyclic pyranopterin phosphate + diphosphate. It functions in the pathway cofactor biosynthesis; molybdopterin biosynthesis. In terms of biological role, catalyzes the conversion of (8S)-3',8-cyclo-7,8-dihydroguanosine 5'-triphosphate to cyclic pyranopterin monophosphate (cPMP). This chain is Cyclic pyranopterin monophosphate synthase, found in Brucella canis (strain ATCC 23365 / NCTC 10854 / RM-666).